A 257-amino-acid polypeptide reads, in one-letter code: Zinc import ATP-binding protein ZnuC (257 aa).

Positions 5-220 (ITLKNVAVNF…PEFIAMFGHH (216 aa)) constitute an ABC transporter domain. 37-44 (GPNGAGKS) serves as a coordination point for ATP.

This sequence belongs to the ABC transporter superfamily. Zinc importer (TC 3.A.1.15.5) family. The complex is composed of two ATP-binding proteins (ZnuC), two transmembrane proteins (ZnuB) and a solute-binding protein (ZnuA).

The protein localises to the cell inner membrane. It catalyses the reaction Zn(2+)(out) + ATP(in) + H2O(in) = Zn(2+)(in) + ADP(in) + phosphate(in) + H(+)(in). Functionally, part of the ABC transporter complex ZnuABC involved in zinc import. Responsible for energy coupling to the transport system. The polypeptide is Zinc import ATP-binding protein ZnuC (Photorhabdus laumondii subsp. laumondii (strain DSM 15139 / CIP 105565 / TT01) (Photorhabdus luminescens subsp. laumondii)).